The chain runs to 255 residues: uncharacterized protein (255 aa).

N-linked (GlcNAc...) asparagine; by host glycosylation is found at Asn-16 and Asn-58. The next 2 membrane-spanning stretches (helical) occupy residues Leu-72–Tyr-92 and Leu-104–Cys-124.

It localises to the membrane. This is an uncharacterized protein from Acanthamoeba polyphaga (Amoeba).